A 367-amino-acid polypeptide reads, in one-letter code: Alginate lyase (367 aa).

A signal peptide spans 1–24 (MTLLKRISSPALLALALFGGAAHA). Substrate contacts are provided by residues 63 to 64 (SK), 136 to 137 (HT), and Tyr-254.

This sequence belongs to the polysaccharide lyase 5 family.

It is found in the periplasm. The enzyme catalyses Eliminative cleavage of alginate to give oligosaccharides with 4-deoxy-alpha-L-erythro-hex-4-enuronosyl groups at their non-reducing ends and beta-D-mannuronate at their reducing end.. Functionally, catalyzes the depolymerization of alginate by cleaving the beta-1,4 glycosidic bond between two adjacent sugar residues via a beta-elimination mechanism. May serve to degrade mislocalized alginate that is trapped in the periplasmic space. This is Alginate lyase from Pseudomonas putida (strain GB-1).